The sequence spans 304 residues: Homoserine O-acetyltransferase (304 aa).

C142 acts as the Acyl-thioester intermediate in catalysis. The substrate site is built by K163 and S192. The Proton acceptor role is filled by H235. Residue E237 is part of the active site. R249 serves as a coordination point for substrate.

It belongs to the MetA family.

Its subcellular location is the cytoplasm. It catalyses the reaction L-homoserine + acetyl-CoA = O-acetyl-L-homoserine + CoA. Its pathway is amino-acid biosynthesis; L-methionine biosynthesis via de novo pathway; O-acetyl-L-homoserine from L-homoserine: step 1/1. Its function is as follows. Transfers an acetyl group from acetyl-CoA to L-homoserine, forming acetyl-L-homoserine. The protein is Homoserine O-acetyltransferase of Clostridium beijerinckii (strain ATCC 51743 / NCIMB 8052) (Clostridium acetobutylicum).